The following is a 134-amino-acid chain: Transcriptional activator protein (134 aa).

A Nuclear localization signal motif is present at residues 17-31; sequence KVQHRIAKKTTRRRR. A zinc finger lies at 36-53; sequence CGCSYFVALGCHNHGFTH. Residues 73–103 form a disordered region; sequence KSPVFQDNQTPRETISEEPRHNHNTSPIQLQ. Residues 75–85 show a composition bias toward polar residues; that stretch reads PVFQDNQTPRE. Residues 119-134 form a transactivation region; that stretch reads NLDSFTSSDLAFLKSI.

The protein belongs to the geminiviridae transcriptional activator protein family. In terms of assembly, monomer. Homodimer. Homooligomer. Self-interaction correlates with nuclear localization and efficient activation of transcription. Monomers suppress local silencing by interacting with and inactivating host adenosine kinase 2 (ADK2) in the cytoplasm. Interacts with and inhibits host SNF1 kinase. Binds to ssDNA. May interact with host RPS27A. Phosphorylated.

Its subcellular location is the host nucleus. It localises to the host cytoplasm. In terms of biological role, multifunctional protein that modulates host antiviral defenses and promotes host attractiveness to insect vectors. Acts as a suppressor of RNA-mediated gene silencing, also known as post-transcriptional gene silencing (PTGS), a mechanism of plant viral defense that limits the accumulation of viral RNAs. TrAP suppresses the host RNA silencing by inhibiting adenosine kinase 2 (ADK2), a kinase involved in a general methylation pathway. Also suppresses the host basal defense by interacting with and inhibiting SNF1 kinase, a key regulator of cell metabolism implicated in innate antiviral defense. Functionally, inhibits signal transduction by the phytohormone jasmonate, making the infected plant more attractive to aphids, which are the second host to play a role as a dissemination vector. Acts by binding to ubiquitin precursor RPS27A, thereby preventing ubiquitin degradation of JAZ. The polypeptide is Transcriptional activator protein (Tomato yellow leaf curl China virus (TYLCCNV)).